The primary structure comprises 350 residues: Histidinol-phosphate aminotransferase (350 aa).

Lysine 212 carries the post-translational modification N6-(pyridoxal phosphate)lysine.

Belongs to the class-II pyridoxal-phosphate-dependent aminotransferase family. Histidinol-phosphate aminotransferase subfamily. As to quaternary structure, homodimer. Pyridoxal 5'-phosphate serves as cofactor.

It catalyses the reaction L-histidinol phosphate + 2-oxoglutarate = 3-(imidazol-4-yl)-2-oxopropyl phosphate + L-glutamate. It participates in amino-acid biosynthesis; L-histidine biosynthesis; L-histidine from 5-phospho-alpha-D-ribose 1-diphosphate: step 7/9. This chain is Histidinol-phosphate aminotransferase, found in Geobacter sulfurreducens (strain ATCC 51573 / DSM 12127 / PCA).